A 528-amino-acid chain; its full sequence is MPISLGNAFIKNFLGKAPDWYKVAIIAFLIINPIVFFLINPFVAGWLLVAEFIFTLAMALKCYPLQPGGLLAIEAIAIGMTSPAQVKHELVANIEVLLLLVFMVAGIYFMKHLLLFIFTKILLGIRSKTLLSLAFCFAAAFLSAFLDALTVIAVVISVAIGFYSIYHKVASGNPIGDHDHTQDDTITELTRDDLENYRAFLRSLLMHAGVGTALGGVTTMVGEPQNLIIADQAGWLFGEFLIRMSPVTLPVFFCGLITCALVEKLKVFGYGAKLPNNVRQILVDFDNEERKTRTNQDVAKLWVQGLIAVWLIVALALHLAAVGLIGLSVIILATAFTGVIEEHSMGKAFEEALPFTALLAVFFSIVAVIIDQELFKPVIDAVLAVEDKGTQLALFYVANGLLSMVSDNVFVGTVYINEVKTALIEGLITREQFDLLAVAINTGTNLPSVATPNGQAAFLFLLTSALAPLIRLSYGRMVIMALPYTIVLAIVGLMGIMFFLEPATASFYDAGWILPHSGDLTPVVSGGH.

At 1-23 the chain is on the cytoplasmic side; the sequence is MPISLGNAFIKNFLGKAPDWYKV. Residues 24 to 46 form a helical membrane-spanning segment; that stretch reads AIIAFLIINPIVFFLINPFVAGW. Residues 47 to 95 lie on the Periplasmic side of the membrane; that stretch reads LLVAEFIFTLAMALKCYPLQPGGLLAIEAIAIGMTSPAQVKHELVANIE. Residues 96–118 form a helical membrane-spanning segment; sequence VLLLLVFMVAGIYFMKHLLLFIF. The Cytoplasmic portion of the chain corresponds to 119-129; the sequence is TKILLGIRSKT. A helical membrane pass occupies residues 130 to 163; sequence LLSLAFCFAAAFLSAFLDALTVIAVVISVAIGFY. Residues 164-239 are Periplasmic-facing; the sequence is SIYHKVASGN…ADQAGWLFGE (76 aa). Residues 240–262 traverse the membrane as a helical segment; it reads FLIRMSPVTLPVFFCGLITCALV. The Cytoplasmic portion of the chain corresponds to 263–297; that stretch reads EKLKVFGYGAKLPNNVRQILVDFDNEERKTRTNQD. Residues 298-317 traverse the membrane as a helical segment; it reads VAKLWVQGLIAVWLIVALAL. The Periplasmic portion of the chain corresponds to 318–320; sequence HLA. Residues 321–340 form a helical membrane-spanning segment; it reads AVGLIGLSVIILATAFTGVI. The Cytoplasmic portion of the chain corresponds to 341–352; that stretch reads EEHSMGKAFEEA. A helical membrane pass occupies residues 353–375; sequence LPFTALLAVFFSIVAVIIDQELF. At 376–389 the chain is on the periplasmic side; that stretch reads KPVIDAVLAVEDKG. Residues 390–412 traverse the membrane as a helical segment; that stretch reads TQLALFYVANGLLSMVSDNVFVG. Over 413–477 the chain is Cytoplasmic; it reads TVYINEVKTA…PLIRLSYGRM (65 aa). Residues 478–500 traverse the membrane as a helical segment; it reads VIMALPYTIVLAIVGLMGIMFFL. Residues 501–528 lie on the Periplasmic side of the membrane; that stretch reads EPATASFYDAGWILPHSGDLTPVVSGGH.

It belongs to the NhaB Na(+)/H(+) (TC 2.A.34) antiporter family.

The protein resides in the cell inner membrane. The enzyme catalyses 2 Na(+)(in) + 3 H(+)(out) = 2 Na(+)(out) + 3 H(+)(in). Na(+)/H(+) antiporter that extrudes sodium in exchange for external protons. This is Na(+)/H(+) antiporter NhaB from Vibrio alginolyticus.